The sequence spans 494 residues: Aspartyl/glutamyl-tRNA(Asn/Gln) amidotransferase subunit B (494 aa).

It belongs to the GatB/GatE family. GatB subfamily. As to quaternary structure, heterotrimer of A, B and C subunits.

It catalyses the reaction L-glutamyl-tRNA(Gln) + L-glutamine + ATP + H2O = L-glutaminyl-tRNA(Gln) + L-glutamate + ADP + phosphate + H(+). It carries out the reaction L-aspartyl-tRNA(Asn) + L-glutamine + ATP + H2O = L-asparaginyl-tRNA(Asn) + L-glutamate + ADP + phosphate + 2 H(+). Its function is as follows. Allows the formation of correctly charged Asn-tRNA(Asn) or Gln-tRNA(Gln) through the transamidation of misacylated Asp-tRNA(Asn) or Glu-tRNA(Gln) in organisms which lack either or both of asparaginyl-tRNA or glutaminyl-tRNA synthetases. The reaction takes place in the presence of glutamine and ATP through an activated phospho-Asp-tRNA(Asn) or phospho-Glu-tRNA(Gln). This Nitrobacter hamburgensis (strain DSM 10229 / NCIMB 13809 / X14) protein is Aspartyl/glutamyl-tRNA(Asn/Gln) amidotransferase subunit B.